A 264-amino-acid polypeptide reads, in one-letter code: Glutamate racemase (264 aa).

Substrate-binding positions include 10 to 11 (DS) and 42 to 43 (YG). The active-site Proton donor/acceptor is the C73. 74-75 (NT) lines the substrate pocket. C183 acts as the Proton donor/acceptor in catalysis. 184 to 185 (TH) provides a ligand contact to substrate.

This sequence belongs to the aspartate/glutamate racemases family.

The catalysed reaction is L-glutamate = D-glutamate. It functions in the pathway cell wall biogenesis; peptidoglycan biosynthesis. Its function is as follows. Provides the (R)-glutamate required for cell wall biosynthesis. In Streptococcus gordonii (strain Challis / ATCC 35105 / BCRC 15272 / CH1 / DL1 / V288), this protein is Glutamate racemase.